We begin with the raw amino-acid sequence, 327 residues long: Porphobilinogen deaminase (327 aa).

Cysteine 251 is modified (S-(dipyrrolylmethanemethyl)cysteine).

It belongs to the HMBS family. Dipyrromethane serves as cofactor.

It catalyses the reaction 4 porphobilinogen + H2O = hydroxymethylbilane + 4 NH4(+). The protein operates within porphyrin-containing compound metabolism; protoporphyrin-IX biosynthesis; coproporphyrinogen-III from 5-aminolevulinate: step 2/4. Functionally, catalyzes the tetrapolymerization of the monopyrrole porphobilinogen (PBG) into the hydroxymethylbilane pre-uroporphyrinogen in several discrete steps. The sequence is that of Porphobilinogen deaminase (HEM3) from Saccharomyces cerevisiae (strain ATCC 204508 / S288c) (Baker's yeast).